The chain runs to 564 residues: CTP synthase (564 aa).

An amidoligase domain region spans residues 1–265; that stretch reads MTKFVFVTGG…DEIVCHRLDI (265 aa). S13 lines the CTP pocket. S13 contributes to the UTP binding site. Residues 14-19 and D71 each bind ATP; that span reads SLGKGI. Residues D71 and E139 each contribute to the Mg(2+) site. CTP contacts are provided by residues 146-148, 186-191, and K222; these read DIE and KTKPTQ. UTP contacts are provided by residues 186-191 and K222; that span reads KTKPTQ. The Glutamine amidotransferase type-1 domain occupies 290 to 543; that stretch reads SIALVGKYVD…IQAAISFAGQ (254 aa). Position 351 (G351) interacts with L-glutamine. C378 functions as the Nucleophile; for glutamine hydrolysis in the catalytic mechanism. L-glutamine-binding positions include 379–382, E402, and R469; that span reads LGMQ. Catalysis depends on residues H516 and E518.

Belongs to the CTP synthase family. As to quaternary structure, homotetramer.

It carries out the reaction UTP + L-glutamine + ATP + H2O = CTP + L-glutamate + ADP + phosphate + 2 H(+). The catalysed reaction is L-glutamine + H2O = L-glutamate + NH4(+). It catalyses the reaction UTP + NH4(+) + ATP = CTP + ADP + phosphate + 2 H(+). The protein operates within pyrimidine metabolism; CTP biosynthesis via de novo pathway; CTP from UDP: step 2/2. Its activity is regulated as follows. Allosterically activated by GTP, when glutamine is the substrate; GTP has no effect on the reaction when ammonia is the substrate. The allosteric effector GTP functions by stabilizing the protein conformation that binds the tetrahedral intermediate(s) formed during glutamine hydrolysis. Inhibited by the product CTP, via allosteric rather than competitive inhibition. Its function is as follows. Catalyzes the ATP-dependent amination of UTP to CTP with either L-glutamine or ammonia as the source of nitrogen. Regulates intracellular CTP levels through interactions with the four ribonucleotide triphosphates. In Nitrosomonas europaea (strain ATCC 19718 / CIP 103999 / KCTC 2705 / NBRC 14298), this protein is CTP synthase.